The primary structure comprises 343 residues: Pentatricopeptide repeat-containing protein At1g06270 (343 aa).

PPR repeat units follow at residues 98-133 (PKIVYSSLLTYCLQSSDPLPLSFAILQRTLRSGCLP), 134-169 (NPQTHLLLSDAWLERRRGSQSVADIINEMKLIGYSP), 170-204 (DTGTCNYLVSSLCAVDKLDEAIKVVEEMSAAGCIP), 205-240 (DVESYGAVINSLCLARKTTDVVKIVKEMVSKAGISP), 241-275 (RKGMLTKVAAALRANREIWKAIEMIEFVESRDYPV), and 276-310 (EFESYEVVVEGCLEVREYILAGKVVMRMTDRGFIP).

Belongs to the PPR family. P subfamily.

The chain is Pentatricopeptide repeat-containing protein At1g06270 from Arabidopsis thaliana (Mouse-ear cress).